The sequence spans 105 residues: Dynein axonemal light chain 4 (105 aa).

Belongs to the dynein light chain family. In terms of assembly, consists of at least two heavy chains and a number of intermediate and light chains.

Its subcellular location is the cytoplasm. The protein resides in the cytoskeleton. It is found in the cilium axoneme. Its function is as follows. Force generating protein of respiratory cilia. Produces force towards the minus ends of microtubules. Dynein has ATPase activity. This chain is Dynein axonemal light chain 4 (Dnal4), found in Mus musculus (Mouse).